A 70-amino-acid polypeptide reads, in one-letter code: Probable tautomerase RSp0893 (70 aa).

Pro2 acts as the Proton acceptor; via imino nitrogen in catalysis.

Belongs to the 4-oxalocrotonate tautomerase family.

The chain is Probable tautomerase RSp0893 from Ralstonia nicotianae (strain ATCC BAA-1114 / GMI1000) (Ralstonia solanacearum).